The chain runs to 225 residues: ATP-dependent dethiobiotin synthetase BioD (225 aa).

12-17 (EVGKTY) serves as a coordination point for ATP. Mg(2+) is bound at residue threonine 16. Residue lysine 37 is part of the active site. Serine 41 is a substrate binding site. Residues aspartate 52, 114-117 (EGAG), and 174-175 (NC) contribute to the ATP site. Aspartate 52 and glutamate 114 together coordinate Mg(2+).

The protein belongs to the dethiobiotin synthetase family. In terms of assembly, homodimer. It depends on Mg(2+) as a cofactor.

The protein resides in the cytoplasm. The enzyme catalyses (7R,8S)-7,8-diammoniononanoate + CO2 + ATP = (4R,5S)-dethiobiotin + ADP + phosphate + 3 H(+). It functions in the pathway cofactor biosynthesis; biotin biosynthesis; biotin from 7,8-diaminononanoate: step 1/2. In terms of biological role, catalyzes a mechanistically unusual reaction, the ATP-dependent insertion of CO2 between the N7 and N8 nitrogen atoms of 7,8-diaminopelargonic acid (DAPA, also called 7,8-diammoniononanoate) to form a ureido ring. The sequence is that of ATP-dependent dethiobiotin synthetase BioD from Francisella tularensis subsp. mediasiatica (strain FSC147).